Reading from the N-terminus, the 272-residue chain is Carbonic anhydrase (272 aa).

The Zn(2+) site is built by cysteine 39, histidine 98, and cysteine 101.

This sequence belongs to the beta-class carbonic anhydrase family. As to quaternary structure, a hexamer formed by a trimer of dimers. Purified from carboxysomes with the both RuBisCO subunits and the full-length form of CcmM, probably interacts with the N-terminus of CcmM. Requires Zn(2+) as cofactor.

The protein localises to the carboxysome. It carries out the reaction hydrogencarbonate + H(+) = CO2 + H2O. Its function is as follows. Reversible hydration of carbon dioxide. Essential to photosynthetic carbon dioxide fixation, supplies CO(2) to RuBisCO (ribulose bisphosphate carboxylase, rbcL-rbcS) in the carboxysome. Loss of activity results in limitation of CO(2) availability to RuBisCO located in the cytoplasm. The polypeptide is Carbonic anhydrase (Synechococcus elongatus (strain ATCC 33912 / PCC 7942 / FACHB-805) (Anacystis nidulans R2)).